The following is a 127-amino-acid chain: MALLSAMKGKLISVIGDEDTCVGFLLGGVGEINKNRHPNFMVVDKNTAVSEIEDCFKRFIKRDDIDIILINQNYAELIRHVIDSHTAPTPAVLEIPSKDHPYDASKDSILRRAKGMFNPEDMIANRG.

It belongs to the V-ATPase F subunit family. V-ATPase is a heteromultimeric enzyme made up of two complexes: the ATP-hydrolytic V1 complex and the proton translocation V0 complex. The V1 complex consists of three catalytic AB heterodimers that form a heterohexamer, three peripheral stalks each consisting of EG heterodimers, one central rotor including subunits D and F, and the regulatory subunits C and H. The proton translocation complex V0 consists of the proton transport subunit a, a ring of proteolipid subunits c9c'', rotary subunit d, subunits e and f, and the accessory subunits VhaAC45 and ATP6AP2.

Functionally, subunit of the V1 complex of vacuolar(H+)-ATPase (V-ATPase), a multisubunit enzyme composed of a peripheral complex (V1) that hydrolyzes ATP and a membrane integral complex (V0) that translocates protons. V-ATPase is responsible for acidifying and maintaining the pH of intracellular compartments and in some cell types, is targeted to the plasma membrane, where it is responsible for acidifying the extracellular environment. This Anopheles gambiae (African malaria mosquito) protein is V-type proton ATPase subunit F (Vha14).